We begin with the raw amino-acid sequence, 398 residues long: 1,4-beta-D-glucan cellobiohydrolase CEL6C (398 aa).

Residues 1-18 form the signal peptide; that stretch reads MKITSSAAALALVASAVA. An N-linked (GlcNAc...) asparagine glycan is attached at Asn70. The active site involves Asp125. The Proton donor role is filled by Asp170. 4 residues coordinate substrate: Trp218, Trp318, Lys346, and Glu350.

It belongs to the glycosyl hydrolase 6 (cellulase B) family. Post-translationally, both N- and O-glycosylated.

Its subcellular location is the secreted. It catalyses the reaction Hydrolysis of (1-&gt;4)-beta-D-glucosidic linkages in cellulose and cellotetraose, releasing cellobiose from the non-reducing ends of the chains.. In terms of biological role, exoglucanase that plays an important function in biomass degradation by catalyzing the hydrolysis of the non-reducing end beta-1,4-glucosidic linkages in cellulose and cellotetraose to release cellobiose. Hydrolyzes crystalline and amorphous cellulose but is inactive on hydroxyethyl cellulose, mannan, galactomannan, xyloglucan, arabinoxylan, arabinan, xylan, and pectin. In Podospora anserina (strain S / ATCC MYA-4624 / DSM 980 / FGSC 10383) (Pleurage anserina), this protein is 1,4-beta-D-glucan cellobiohydrolase CEL6C.